The following is a 935-amino-acid chain: Pre-mRNA-splicing factor CWC22 homolog (935 aa).

Positions 1 to 179 are disordered; sequence MSRSPSPDSP…PKDLLRTRTG (179 aa). Composition is skewed to basic and acidic residues over residues 13–25 and 49–70; these read VRDD…REQS and ESSR…DEKM. Positions 84-148 are enriched in basic residues; it reads QHRRHRESRS…RSPARRRSPV (65 aa). Residues 159-175 show a composition bias toward basic and acidic residues; that stretch reads PTEEPEKKKNDPKDLLR. Positions 212 to 400 constitute an MIF4G domain; sequence KKKIHGLVNR…ETAMQIRKDK (189 aa). Residues 463 to 489 are disordered; sequence ADISSDEEEEVEDDDEESEAEEAPRKT. Positions 465–483 are enriched in acidic residues; it reads ISSDEEEEVEDDDEESEAE. The region spanning 502–633 is the MI domain; the sequence is AFRREVYLTL…EWKILADVKM (132 aa). The interval 725–935 is disordered; it reads KAAQSSSDSS…VGSDDRRRRH (211 aa). The segment covering 729-763 has biased composition (low complexity); sequence SSSDSSSDSSDSSDSSDSSGSSDSSDDSSSSSSSD. Basic and acidic residues-rich tracts occupy residues 780–891 and 897–935; these read KKKE…DRKE and DRRD…RRRH.

It belongs to the CWC22 family.

The protein resides in the nucleus. It localises to the nucleus speckle. Required for early embryogenesis and tissue differentiation. Required for pre-mRNA splicing and for exon-junction complex (EJC) assembly. Hinders EIF4A3 from non-specifically binding RNA and escorts it to the splicing machinery to promote EJC assembly on mature mRNAs. Through its role in EJC assembly, required for nonsense-mediated mRNA decay. The polypeptide is Pre-mRNA-splicing factor CWC22 homolog (Caenorhabditis briggsae).